Here is a 207-residue protein sequence, read N- to C-terminus: UPF0328 protein ECU02_1590/ECU04_0060/ECU08_2120 (207 aa).

Disordered stretches follow at residues 1–154 (MPRP…HSHT) and 180–207 (GRLH…LATL). 2 stretches are compositionally biased toward basic and acidic residues: residues 14-24 (DHPDFRSESSA) and 75-97 (HTEG…ETES). Polar residues-rich tracts occupy residues 98–121 (PKPQ…SQNT) and 133–149 (SRPS…QSPH).

This sequence belongs to the UPF0328 family.

The protein is UPF0328 protein ECU02_1590/ECU04_0060/ECU08_2120 of Encephalitozoon cuniculi (strain GB-M1) (Microsporidian parasite).